A 475-amino-acid chain; its full sequence is Ankyrin repeat, SAM and basic leucine zipper domain-containing protein 1 (475 aa).

The interval 1-25 (MAAGALRGLPVAGGGESSESEDDGW) is disordered. A phosphoserine mark is found at serine 17, serine 18, and serine 20. 6 ANK repeats span residues 45–74 (EKKE…SVDS), 78–107 (YGWT…NASF), 110–144 (DKQT…DPNV), 148–177 (RLMT…EVNT), 181–210 (NGYT…NKML), and 214–243 (DGKM…PLEG). The 63-residue stretch at 272–334 (SYTAFGDLEV…KILAALKELQ (63 aa)) folds into the SAM domain.

In terms of assembly, interacts with DDX4, PIWIL1, RANBP9 and TDRD1.

The protein resides in the cytoplasm. Its function is as follows. Plays a central role during spermatogenesis by repressing transposable elements and preventing their mobilization, which is essential for the germline integrity. Acts via the piRNA metabolic process, which mediates the repression of transposable elements during meiosis by forming complexes composed of piRNAs and Piwi proteins and governs the methylation and subsequent repression of transposons. Its association with pi-bodies suggests a participation in the primary piRNAs metabolic process. Required prior to the pachytene stage to facilitate the production of multiple types of piRNAs, including those associated with repeats involved in the regulation of retrotransposons. May act by mediating protein-protein interactions during germ cell maturation. This Chlorocebus aethiops (Green monkey) protein is Ankyrin repeat, SAM and basic leucine zipper domain-containing protein 1 (ASZ1).